Here is a 147-residue protein sequence, read N- to C-terminus: Large ribosomal subunit protein uL11 (147 aa).

It belongs to the universal ribosomal protein uL11 family. As to quaternary structure, part of the ribosomal stalk of the 50S ribosomal subunit. Interacts with L10 and the large rRNA to form the base of the stalk. L10 forms an elongated spine to which L12 dimers bind in a sequential fashion forming a multimeric L10(L12)X complex. Post-translationally, one or more lysine residues are methylated.

In terms of biological role, forms part of the ribosomal stalk which helps the ribosome interact with GTP-bound translation factors. The sequence is that of Large ribosomal subunit protein uL11 from Metamycoplasma arthritidis (strain 158L3-1) (Mycoplasma arthritidis).